Here is a 412-residue protein sequence, read N- to C-terminus: DNA replication and repair protein RecF (412 aa).

30 to 37 (GANGAGKT) serves as a coordination point for ATP. Residues 369 to 412 (LQVRPGGGTAAVTPDPEYARGEATAANGAASAPTGADAASTSRD) are disordered. Residues 389–412 (GEATAANGAASAPTGADAASTSRD) are compositionally biased toward low complexity.

This sequence belongs to the RecF family.

The protein localises to the cytoplasm. Its function is as follows. The RecF protein is involved in DNA metabolism; it is required for DNA replication and normal SOS inducibility. RecF binds preferentially to single-stranded, linear DNA. It also seems to bind ATP. This is DNA replication and repair protein RecF from Salinibacter ruber (strain DSM 13855 / M31).